Reading from the N-terminus, the 325-residue chain is N-acetyl-gamma-glutamyl-phosphate reductase (325 aa).

The active site involves Cys-135.

This sequence belongs to the NAGSA dehydrogenase family. Type 1 subfamily.

It is found in the cytoplasm. It carries out the reaction N-acetyl-L-glutamate 5-semialdehyde + phosphate + NADP(+) = N-acetyl-L-glutamyl 5-phosphate + NADPH + H(+). The protein operates within amino-acid biosynthesis; L-arginine biosynthesis; N(2)-acetyl-L-ornithine from L-glutamate: step 3/4. In terms of biological role, catalyzes the NADPH-dependent reduction of N-acetyl-5-glutamyl phosphate to yield N-acetyl-L-glutamate 5-semialdehyde. This is N-acetyl-gamma-glutamyl-phosphate reductase from Karelsulcia muelleri (strain GWSS) (Sulcia muelleri).